A 458-amino-acid polypeptide reads, in one-letter code: Putative long chain fatty acid-CoA ligase VraA (458 aa).

It belongs to the ATP-dependent AMP-binding enzyme family.

In Staphylococcus aureus (strain Mu3 / ATCC 700698), this protein is Putative long chain fatty acid-CoA ligase VraA (vraA).